Consider the following 84-residue polypeptide: UPF0291 protein EUBELI_00985 (84 aa).

This sequence belongs to the UPF0291 family.

It is found in the cytoplasm. This is UPF0291 protein EUBELI_00985 from Lachnospira eligens (strain ATCC 27750 / DSM 3376 / VPI C15-48 / C15-B4) (Eubacterium eligens).